Reading from the N-terminus, the 483-residue chain is UDP-N-acetylmuramate--L-alanine ligase (483 aa).

125–131 (GTHGKTT) contributes to the ATP binding site.

It belongs to the MurCDEF family.

The protein resides in the cytoplasm. It catalyses the reaction UDP-N-acetyl-alpha-D-muramate + L-alanine + ATP = UDP-N-acetyl-alpha-D-muramoyl-L-alanine + ADP + phosphate + H(+). Its pathway is cell wall biogenesis; peptidoglycan biosynthesis. Cell wall formation. This is UDP-N-acetylmuramate--L-alanine ligase from Pseudoalteromonas translucida (strain TAC 125).